The following is a 232-amino-acid chain: Enolase-phosphatase E1 (232 aa).

Belongs to the HAD-like hydrolase superfamily. MasA/MtnC family. In terms of assembly, monomer. It depends on Mg(2+) as a cofactor.

The enzyme catalyses 5-methylsulfanyl-2,3-dioxopentyl phosphate + H2O = 1,2-dihydroxy-5-(methylsulfanyl)pent-1-en-3-one + phosphate. The protein operates within amino-acid biosynthesis; L-methionine biosynthesis via salvage pathway; L-methionine from S-methyl-5-thio-alpha-D-ribose 1-phosphate: step 3/6. Its pathway is amino-acid biosynthesis; L-methionine biosynthesis via salvage pathway; L-methionine from S-methyl-5-thio-alpha-D-ribose 1-phosphate: step 4/6. Functionally, bifunctional enzyme that catalyzes the enolization of 2,3-diketo-5-methylthiopentyl-1-phosphate (DK-MTP-1-P) into the intermediate 2-hydroxy-3-keto-5-methylthiopentenyl-1-phosphate (HK-MTPenyl-1-P), which is then dephosphorylated to form the acireductone 1,2-dihydroxy-3-keto-5-methylthiopentene (DHK-MTPene). The protein is Enolase-phosphatase E1 of Xanthomonas oryzae pv. oryzae (strain KACC10331 / KXO85).